Consider the following 129-residue polypeptide: Fluoride-specific ion channel FluC (129 aa).

4 helical membrane passes run 8 to 28, 34 to 54, 70 to 90, and 102 to 122; these read ILLV…VALW, AVFP…IGFI, IFLV…MIEH, and AALY…LGII. 2 residues coordinate Na(+): glycine 78 and threonine 81.

The protein belongs to the fluoride channel Fluc/FEX (TC 1.A.43) family.

The protein resides in the cell inner membrane. The catalysed reaction is fluoride(in) = fluoride(out). Na(+) is not transported, but it plays an essential structural role and its presence is essential for fluoride channel function. Its function is as follows. Fluoride-specific ion channel. Important for reducing fluoride concentration in the cell, thus reducing its toxicity. The chain is Fluoride-specific ion channel FluC from Chlorobium chlorochromatii (strain CaD3).